Reading from the N-terminus, the 1032-residue chain is Putative oxidoreductase YgfK (1032 aa).

The 4Fe-4S ferredoxin-type domain occupies 928–958 (RFQTLHLDAYCNECGNCAQFCPWNGKPYKDK). [4Fe-4S] cluster contacts are provided by cysteine 938, cysteine 941, cysteine 944, and cysteine 948.

Requires [4Fe-4S] cluster as cofactor.

In terms of biological role, could be an iron-sulfur flavoprotein with NADPH:O(2) oxidoreductase activity. The polypeptide is Putative oxidoreductase YgfK (ygfK) (Escherichia coli (strain K12)).